Reading from the N-terminus, the 389-residue chain is PqqA peptide cyclase (389 aa).

Residues 20–235 (VGLPLWLLAE…TNEYRARLEA (216 aa)) form the Radical SAM core domain. [4Fe-4S] cluster contacts are provided by cysteine 34, cysteine 38, and cysteine 41.

Belongs to the radical SAM superfamily. PqqE family. In terms of assembly, interacts with PqqD. The interaction is necessary for activity of PqqE. [4Fe-4S] cluster is required as a cofactor.

It carries out the reaction [PQQ precursor protein] + S-adenosyl-L-methionine = E-Y cross-linked-[PQQ precursor protein] + 5'-deoxyadenosine + L-methionine + H(+). It participates in cofactor biosynthesis; pyrroloquinoline quinone biosynthesis. In terms of biological role, catalyzes the cross-linking of a glutamate residue and a tyrosine residue in the PqqA protein as part of the biosynthesis of pyrroloquinoline quinone (PQQ). The chain is PqqA peptide cyclase from Pseudomonas fluorescens (strain ATCC BAA-477 / NRRL B-23932 / Pf-5).